We begin with the raw amino-acid sequence, 207 residues long: SPRY domain-containing protein 4 (207 aa).

Residues 12–207 enclose the B30.2/SPRY domain; that stretch reads YRWGTKRWGV…HSGLEVPKGL (196 aa). Lys53 and Lys130 each carry N6-acetyllysine. At Lys139 the chain carries N6-succinyllysine.

The sequence is that of SPRY domain-containing protein 4 (Spryd4) from Mus musculus (Mouse).